We begin with the raw amino-acid sequence, 510 residues long: 2,3-bisphosphoglycerate-independent phosphoglycerate mutase (510 aa).

The Mn(2+) site is built by aspartate 11 and serine 61. Residue serine 61 is the Phosphoserine intermediate of the active site. Substrate is bound by residues histidine 124, 154–155 (RD), arginine 185, arginine 191, 260–263 (RPDR), and lysine 333. Aspartate 398, histidine 402, aspartate 439, histidine 440, and histidine 457 together coordinate Mn(2+).

Belongs to the BPG-independent phosphoglycerate mutase family. As to quaternary structure, monomer. The cofactor is Mn(2+).

The enzyme catalyses (2R)-2-phosphoglycerate = (2R)-3-phosphoglycerate. It participates in carbohydrate degradation; glycolysis; pyruvate from D-glyceraldehyde 3-phosphate: step 3/5. Catalyzes the interconversion of 2-phosphoglycerate and 3-phosphoglycerate. In Mycoplasma mobile (strain ATCC 43663 / 163K / NCTC 11711) (Mesomycoplasma mobile), this protein is 2,3-bisphosphoglycerate-independent phosphoglycerate mutase.